The primary structure comprises 249 residues: Segregation and condensation protein A (249 aa).

This sequence belongs to the ScpA family. In terms of assembly, component of a cohesin-like complex composed of ScpA, ScpB and the Smc homodimer, in which ScpA and ScpB bind to the head domain of Smc. The presence of the three proteins is required for the association of the complex with DNA.

It is found in the cytoplasm. Functionally, participates in chromosomal partition during cell division. May act via the formation of a condensin-like complex containing Smc and ScpB that pull DNA away from mid-cell into both cell halves. The chain is Segregation and condensation protein A from Listeria innocua serovar 6a (strain ATCC BAA-680 / CLIP 11262).